Consider the following 156-residue polypeptide: Large ribosomal subunit protein uL15 (156 aa).

Residues 1–11 (MKLNDLRDKPG) are compositionally biased toward basic and acidic residues. A disordered region spans residues 1–44 (MKLNDLRDKPGSVKARKRVGRGIGSGTGKTGGRGVKGQKSRSGV). Residues 21 to 35 (RGIGSGTGKTGGRGV) are compositionally biased toward gly residues.

Belongs to the universal ribosomal protein uL15 family. As to quaternary structure, part of the 50S ribosomal subunit.

Functionally, binds to the 23S rRNA. This Brucella abortus (strain S19) protein is Large ribosomal subunit protein uL15.